A 215-amino-acid chain; its full sequence is MKLNRYLDHTLLKPEATEQQIDQVVREALENHFYSVMVNPYWVKHVHAQLAGSDVATACVIGFPLGANTTAIKVAEAKQAIADGVDELDMVINIGELKGDHYDAVQQDIESVVTVGHTADKVVKVIIETALLTDGEIVKASEIVADAHADFVKTSTGFSTRGASVHDISLMKGAVQDRIGVKASGGIHTRDEALAMIDAGATRLGVSASMAIIGK.

Catalysis depends on aspartate 89, which acts as the Proton donor/acceptor. The active-site Schiff-base intermediate with acetaldehyde is the lysine 153. Lysine 182 (proton donor/acceptor) is an active-site residue.

Belongs to the DeoC/FbaB aldolase family. DeoC type 1 subfamily.

The protein resides in the cytoplasm. It catalyses the reaction 2-deoxy-D-ribose 5-phosphate = D-glyceraldehyde 3-phosphate + acetaldehyde. The protein operates within carbohydrate degradation; 2-deoxy-D-ribose 1-phosphate degradation; D-glyceraldehyde 3-phosphate and acetaldehyde from 2-deoxy-alpha-D-ribose 1-phosphate: step 2/2. Catalyzes a reversible aldol reaction between acetaldehyde and D-glyceraldehyde 3-phosphate to generate 2-deoxy-D-ribose 5-phosphate. This is Deoxyribose-phosphate aldolase from Lactiplantibacillus plantarum (strain ATCC BAA-793 / NCIMB 8826 / WCFS1) (Lactobacillus plantarum).